Consider the following 428-residue polypeptide: Glutamate-1-semialdehyde 2,1-aminomutase (428 aa).

Position 267 is an N6-(pyridoxal phosphate)lysine (lysine 267).

It belongs to the class-III pyridoxal-phosphate-dependent aminotransferase family. HemL subfamily. In terms of assembly, homodimer. The cofactor is pyridoxal 5'-phosphate.

It is found in the cytoplasm. It catalyses the reaction (S)-4-amino-5-oxopentanoate = 5-aminolevulinate. It functions in the pathway porphyrin-containing compound metabolism; protoporphyrin-IX biosynthesis; 5-aminolevulinate from L-glutamyl-tRNA(Glu): step 2/2. It participates in porphyrin-containing compound metabolism; chlorophyll biosynthesis. The protein is Glutamate-1-semialdehyde 2,1-aminomutase of Prochlorococcus marinus (strain MIT 9303).